Here is a 285-residue protein sequence, read N- to C-terminus: NAD kinase (285 aa).

Residue D66 is the Proton acceptor of the active site. Residues 66–67 (DG), 137–138 (ND), R148, R165, D167, and 178–183 (TAYSLS) contribute to the NAD(+) site.

The protein belongs to the NAD kinase family. A divalent metal cation serves as cofactor.

It is found in the cytoplasm. The enzyme catalyses NAD(+) + ATP = ADP + NADP(+) + H(+). In terms of biological role, involved in the regulation of the intracellular balance of NAD and NADP, and is a key enzyme in the biosynthesis of NADP. Catalyzes specifically the phosphorylation on 2'-hydroxyl of the adenosine moiety of NAD to yield NADP. The polypeptide is NAD kinase (Prosthecochloris aestuarii (strain DSM 271 / SK 413)).